We begin with the raw amino-acid sequence, 766 residues long: U3 small nucleolar RNA-associated protein 14 homolog C (766 aa).

A disordered region spans residues 14 to 42 (HQEELVDLPKNYPLSENEDEGDSDGERKH). Phosphoserine occurs at positions 28, 51, 76, and 80. A Glycyl lysine isopeptide (Lys-Gly) (interchain with G-Cter in SUMO2) cross-link involves residue Lys-121. Thr-204 carries the phosphothreonine modification. 2 coiled-coil regions span residues 216-245 (LEEAKMHRAELQRARALQSYYEAKARKEKK) and 316-346 (LEARQAMQEQLAKNKELTQKLQVASESEEEE). The tract at residues 365–563 (MNVDGPNPWM…EQLINLQNFL (199 aa)) is disordered. Residues 396–405 (ELAAHEVSAS) are compositionally biased toward low complexity. Phosphoserine is present on residues Ser-403 and Ser-405. A compositionally biased stretch (basic and acidic residues) spans 407–434 (AEERPVAEEEILLREFEERQSLRKRSEL). Ser-443 is modified (phosphoserine). Residue Lys-447 forms a Glycyl lysine isopeptide (Lys-Gly) (interchain with G-Cter in SUMO2) linkage. Residue Ser-451 is modified to Phosphoserine. Residues 452–470 (QEVLSELRALSQKLKEKHQ) are a coiled coil. Basic residues predominate over residues 466–475 (KEKHQSRKQK). Over residues 502-527 (RSERVQTLEELEELGKEDCFQNKELP) the composition is skewed to basic and acidic residues. Lys-517 is covalently cross-linked (Glycyl lysine isopeptide (Lys-Gly) (interchain with G-Cter in SUMO2)). Residues 533 to 542 (GQQSERTPNN) are compositionally biased toward polar residues. The segment covering 545–555 (DAPKEKKEKEQ) has biased composition (basic and acidic residues). The residue at position 567 (Ser-567) is a Phosphoserine. Lys-732 is covalently cross-linked (Glycyl lysine isopeptide (Lys-Gly) (interchain with G-Cter in SUMO2)). Positions 734–766 (EDVGYQSSSRSDLPVIQRNPKRITTRHNKEEKL) are disordered.

Belongs to the UTP14 family. In terms of tissue distribution, expressed in testis.

The protein resides in the nucleus. The protein localises to the nucleolus. Its function is as follows. Essential for spermatogenesis. May be required specifically for ribosome biogenesis and hence protein synthesis during male meiosis. The protein is U3 small nucleolar RNA-associated protein 14 homolog C (UTP14C) of Homo sapiens (Human).